The primary structure comprises 913 residues: Tyrosine-protein phosphatase non-receptor type 3 (913 aa).

An FERM domain is found at 29 to 312; that stretch reads VICSIRFLDG…EHHSFFQAKK (284 aa). 3 positions are modified to phosphoserine: S357, S359, and S367. Disordered regions lie at residues 364 to 400 and 417 to 473; these read ETKS…DNLA and KGPL…PDGV. A Phosphothreonine modification is found at T376. S381 carries the post-translational modification Phosphoserine. The segment covering 382-393 has biased composition (basic residues); it reads PRLRHEIRKPRH. Residue S425 is modified to Phosphoserine. A compositionally biased stretch (polar residues) spans 441–453; sequence SENNPAQSCLTQK. Residues 454 to 470 are compositionally biased toward low complexity; it reads SSSSVSPSSNAPGSCSP. Residues 510-582 enclose the PDZ domain; it reads LIRITPDEEG…DQVVMFIKAS (73 aa). Residues 646–901 form the Tyrosine-protein phosphatase domain; that stretch reads VLIQFEQLYR…KFVCEAILRV (256 aa). Substrate is bound by residues D811, 842 to 848, and Q886; that span reads CSAGIGR. Residue C842 is the Phosphocysteine intermediate of the active site.

The protein belongs to the protein-tyrosine phosphatase family. Non-receptor class subfamily.

Its subcellular location is the cell membrane. The protein localises to the cytoplasm. It localises to the cytoskeleton. It catalyses the reaction O-phospho-L-tyrosyl-[protein] + H2O = L-tyrosyl-[protein] + phosphate. Functionally, may act at junctions between the membrane and the cytoskeleton. This is Tyrosine-protein phosphatase non-receptor type 3 (Ptpn3) from Mus musculus (Mouse).